Reading from the N-terminus, the 341-residue chain is MNSLVALVLLGQIIGSTLSSQVRGDLECDEKDAKEWTDTGVRYINEHKLHGYKYALNVIKNIVVVPWDGDWVAVFLKLNLLETECHVLDPTPVKNCTVRPQHNHAVEMDCDVKIMFNVDTFKEDVFAKCHSTPDSVENVRRNCPKCPILLPSNNPQVVDSVEYVLNKHNEKLSDHVYEVLEISRGQHKYEPEAYYVEFAIVEVNCTAQELHDDHHHCHPNTAGEDHIGFCRATVFRSHASLEKPKDEQFESDCVILHVKEGHAHSHLIQQHVEKDSISPEHNNTALNFVHPHNDTSTSHESHEHLAEVPVAFVKKELPKDISDRHTTPVKGCPGKVHHFEL.

A signal peptide spans 1–19; the sequence is MNSLVALVLLGQIIGSTLS. 2 consecutive Cystatin fetuin-A-type domains span residues 22–130 and 141–254; these read VRGD…AKCH and RNCP…SDCV. Positions 23–25 match the Cell attachment site motif; that stretch reads RGD. Cystine bridges form between C28/C332, C85/C96, C110/C129, C143/C146, C205/C217, and C230/C253. N95 carries an N-linked (GlcNAc...) asparagine glycan. An N-linked (GlcNAc...) asparagine glycan is attached at N204. N282 and N293 each carry an N-linked (GlcNAc...) asparagine glycan.

In terms of assembly, homodimer. In terms of tissue distribution, expressed by the liver.

It is found in the secreted. In terms of biological role, potent inhibitor of hemorrhagic activity but also proteolytic activities of atrolysin C and jararhagin. Inhibition occurs by formation of a non-covalent complex between BJ46a and the proteinases at their metalloproteinase domains. The sequence is that of Antihemorrhagic factor BJ46a from Bothrops jararaca (Jararaca).